Reading from the N-terminus, the 523-residue chain is Arabinose import ATP-binding protein AraG (523 aa).

2 ABC transporter domains span residues L20–R255 and I268–T511. G52–S59 contributes to the ATP binding site.

The protein belongs to the ABC transporter superfamily. Arabinose importer (TC 3.A.1.2.2) family. As to quaternary structure, the complex is composed of two ATP-binding proteins (AraG), two transmembrane proteins (AraH) and a solute-binding protein (AraF).

The protein localises to the cell inner membrane. The catalysed reaction is L-arabinose(out) + ATP + H2O = L-arabinose(in) + ADP + phosphate + H(+). Part of the ABC transporter complex AraFGH involved in arabinose import. Responsible for energy coupling to the transport system. The sequence is that of Arabinose import ATP-binding protein AraG from Yersinia pestis bv. Antiqua (strain Antiqua).